The primary structure comprises 127 residues: Small ribosomal subunit protein uS11 (127 aa).

Belongs to the universal ribosomal protein uS11 family. In terms of assembly, part of the 30S ribosomal subunit. Interacts with proteins S7 and S18. Binds to IF-3.

In terms of biological role, located on the platform of the 30S subunit, it bridges several disparate RNA helices of the 16S rRNA. Forms part of the Shine-Dalgarno cleft in the 70S ribosome. This chain is Small ribosomal subunit protein uS11, found in Rickettsia africae (strain ESF-5).